The chain runs to 232 residues: Dehydrin DHN2 (232 aa).

Over residues Met-1–Thr-12 the composition is skewed to polar residues. Disordered stretches follow at residues Met-1–Thr-92, Pro-131–Gly-156, and Pro-173–His-232. Positions Thr-73–Gly-82 are enriched in gly residues. Over residues Pro-131–Thr-140 the composition is skewed to basic and acidic residues. A compositionally biased stretch (gly residues) spans Thr-143–Gly-156. The span at Tyr-200–Leu-223 shows a compositional bias: basic and acidic residues.

Belongs to the plant dehydrin family.

The protein is Dehydrin DHN2 (DHN2) of Pisum sativum (Garden pea).